Here is a 267-residue protein sequence, read N- to C-terminus: Phosphatidylserine decarboxylase proenzyme (267 aa).

Catalysis depends on charge relay system; for autoendoproteolytic cleavage activity residues Asp78, His132, and Ser236. The active-site Schiff-base intermediate with substrate; via pyruvic acid; for decarboxylase activity is Ser236. Ser236 is subject to Pyruvic acid (Ser); by autocatalysis.

It belongs to the phosphatidylserine decarboxylase family. PSD-B subfamily. Prokaryotic type I sub-subfamily. In terms of assembly, heterodimer of a large membrane-associated beta subunit and a small pyruvoyl-containing alpha subunit. It depends on pyruvate as a cofactor. Post-translationally, is synthesized initially as an inactive proenzyme. Formation of the active enzyme involves a self-maturation process in which the active site pyruvoyl group is generated from an internal serine residue via an autocatalytic post-translational modification. Two non-identical subunits are generated from the proenzyme in this reaction, and the pyruvate is formed at the N-terminus of the alpha chain, which is derived from the carboxyl end of the proenzyme. The autoendoproteolytic cleavage occurs by a canonical serine protease mechanism, in which the side chain hydroxyl group of the serine supplies its oxygen atom to form the C-terminus of the beta chain, while the remainder of the serine residue undergoes an oxidative deamination to produce ammonia and the pyruvoyl prosthetic group on the alpha chain. During this reaction, the Ser that is part of the protease active site of the proenzyme becomes the pyruvoyl prosthetic group, which constitutes an essential element of the active site of the mature decarboxylase.

It is found in the cell membrane. It carries out the reaction a 1,2-diacyl-sn-glycero-3-phospho-L-serine + H(+) = a 1,2-diacyl-sn-glycero-3-phosphoethanolamine + CO2. Its pathway is phospholipid metabolism; phosphatidylethanolamine biosynthesis; phosphatidylethanolamine from CDP-diacylglycerol: step 2/2. Catalyzes the formation of phosphatidylethanolamine (PtdEtn) from phosphatidylserine (PtdSer). The chain is Phosphatidylserine decarboxylase proenzyme from Helicobacter pylori (strain ATCC 700392 / 26695) (Campylobacter pylori).